A 156-amino-acid polypeptide reads, in one-letter code: UPF0266 membrane protein YobD (156 aa).

Over Met1–Asp5 the chain is Periplasmic. A helical transmembrane segment spans residues Leu6–Met26. Residues Pro27–Arg44 lie on the Cytoplasmic side of the membrane. Residues Val45–His65 traverse the membrane as a helical segment. A topological domain (periplasmic) is located at residue Gly66. Residues Ala67–Ile87 traverse the membrane as a helical segment. Residues Arg88 to Ile156 are Cytoplasmic-facing.

It belongs to the UPF0266 family.

The protein resides in the cell inner membrane. In Salmonella typhimurium (strain LT2 / SGSC1412 / ATCC 700720), this protein is UPF0266 membrane protein YobD (yobD).